Consider the following 1039-residue polypeptide: RNA-binding protein Unr (1039 aa).

A compositionally biased stretch (polar residues) spans 49-62 (TTLGLQPQGQGPSP). Disordered stretches follow at residues 49–126 (TTLG…QQQH) and 165–184 (SIFG…PSQT). 3 stretches are compositionally biased toward low complexity: residues 63-80 (QQQQ…QHQQ), 89-126 (QQHM…QQQH), and 165-182 (SIFG…ADPS). The 65-residue stretch at 186–250 (RETGIIEKLL…GKPIASQVSK (65 aa)) folds into the CSD 1 domain. The CSD 2; degenerate domain occupies 261 to 337 (RVTGTVTTEL…GNLGACHIRL (77 aa)). Positions 345-413 (KYRGVVCSMK…GREFACNITR (69 aa)) constitute a CSD 3 domain. The CSD 4; degenerate domain occupies 428 to 503 (VYKGQVLKSL…RDQLQRATSI (76 aa)). The CSD 5 domain maps to 517–585 (REQGTIASLK…SRLQAIRIKH (69 aa)). The CSD 6; degenerate domain maps to 593-673 (FETLVASNIE…KECIAVNVQQ (81 aa)). The interval 721 to 741 (QNGYVMHGSPGGSTSSVGSNN) is disordered. A compositionally biased stretch (low complexity) spans 732 to 741 (GSTSSVGSNN). In terms of domain architecture, CSD 7 spans 763-831 (VYRGFIAVMK…NCLPAENVRM (69 aa)). In terms of domain architecture, CSD 8; degenerate spans 846–919 (THNGVVARPL…SGRAACVNAV (74 aa)). The CSD 9 domain occupies 922–987 (KKRATVDSIK…GKSSACNVLK (66 aa)).

Belongs to the UNR family. In terms of assembly, interacts with Sxl; cooperates with Sxl to prevent translation of msl-2 transcripts. Interacts with mle; promoting association between mle and roX2 non-coding RNA. Interacts (via CSD domain 7-9) with pAbp; promoting translation inhibition of msl-2 transcripts.

The protein resides in the cytoplasm. In terms of biological role, RNA-binding protein that acts as a regulator of dosage compensation in both males and females. In males, acts as positive regulator of dosage compensation by promoting assembly of the MSL complex, a multiprotein complex that mediates X-chromosome dosage compensation. Promotes MSL complex assembly via association with roX1 and roX2 non-coding RNA components of the MSL complex, facilitating the interaction between non-coding RNAs and mle. In females, acts as an inhibitor of dosage compensation together with Sxl by preventing production of msl-2 protein, an essential component of the MSL complex. Specifically binds to the 3'-UTR of msl-2 transcripts, and cooperates with Sxl to prevent translation initiation of msl-2 transcripts. Mechanistically, Sxl and Unr inhibit translation initiation by preventing ribosome recruitment after pAbp-mediated recruitment of the eIF4F complex. The sequence is that of RNA-binding protein Unr from Drosophila melanogaster (Fruit fly).